Consider the following 931-residue polypeptide: MAEYKDTLNLPNTSFPMKASLSVREPEMLADWQAKGIYQKIRKARVGSKRFILHDGPPYANGHLHCGHALNKILKDIIIKSKTFSGFDAPFVPGWDCHGLPIELNVEKKVGKAGSKISPREFRAKCREYAASQIDIQRDEFQRLGVLGDWYNPYVTMDYHYEANIVRALGLMIKNGHLQQGFKPVHWCIDCGSALAEAEVDYEDKTSPSIDVAFSAVNPSEFLNCFETQPAVKPLILPIWTTTPWTLPANEAVCLHPEIDYALIDAGNSYYIVATDLVESVMARYGISHYKTSGFAKGRVFEHFKLQHPFYKRQVPVVLAEHVTTESGTGCVHTAPAHGPDDYLVGQSYQLPLINPVMANGCFAENVELFAGISVLKANETILAVLSERNVLLASESIRHSYPHCWRHKSPMIFLATPQWFISMDKSNLRQAIINEIDKVNWVPDWGKARISNMVENRPDWCISRQRSWGTPMPLFVHKTTRELHPDTLELIERVAVMIEKSGIDAWFDLDSSELLGDDAKHYDKITDTMDVWLDSGISHYSVLKHNNDLDFPADVYFEGSDQHRGWFNSSLTTAVAMYGVAPYKTVLTHGYTVDAEGKKLSKSKGNYVALDKLVNQHGADILRLWVASTDYRHEVSISEEIIKRNADAYRRIRNTARFLLANLFDFNPASDCIDAKELLELDRWALKRCQLLQEEIITAYENYHFHLIYQKIHNFCAVDMGSFYLDLIKDRQYTTAKDSIARRSCQTAMYHMVKAFTIWLAPILSFTAEEIWQTIPGNNSESIFIEHWYNAWPTIDAVNMEDWEQLHIVRDEVNKALEETRQRGEIGSALAAEVTVYADAKVLPKLTRLGEELRFLFITSEAKACPISQSPKGLAVTDCGVSIQVTASVHEKCARCWHRREDVGQNQEHPELCLRCVGNISRYHEERLYI.

The 'HIGH' region motif lies at 58–68 (PYANGHLHCGH). Residue E559 coordinates L-isoleucyl-5'-AMP. The 'KMSKS' region motif lies at 600–604 (KLSKS). K603 lines the ATP pocket. Residues C894, C897, C914, and C917 each coordinate Zn(2+).

It belongs to the class-I aminoacyl-tRNA synthetase family. IleS type 1 subfamily. In terms of assembly, monomer. Zn(2+) serves as cofactor.

The protein localises to the cytoplasm. The catalysed reaction is tRNA(Ile) + L-isoleucine + ATP = L-isoleucyl-tRNA(Ile) + AMP + diphosphate. In terms of biological role, catalyzes the attachment of isoleucine to tRNA(Ile). As IleRS can inadvertently accommodate and process structurally similar amino acids such as valine, to avoid such errors it has two additional distinct tRNA(Ile)-dependent editing activities. One activity is designated as 'pretransfer' editing and involves the hydrolysis of activated Val-AMP. The other activity is designated 'posttransfer' editing and involves deacylation of mischarged Val-tRNA(Ile). The chain is Isoleucine--tRNA ligase from Legionella pneumophila (strain Corby).